The following is a 115-amino-acid chain: Somatostatin-2 (115 aa).

An N-terminal signal peptide occupies residues 1–18 (MKVCRIHCALALLGLALA). Positions 19–87 (ICSQGAASQP…KEDLRVELER (69 aa)) are excised as a propeptide. A disulfide bond links C104 and C115.

Belongs to the somatostatin family.

The protein localises to the secreted. In terms of biological role, somatostatin inhibits the release of somatotropin. This is Somatostatin-2 (sst2) from Oncorhynchus mykiss (Rainbow trout).